Here is an 833-residue protein sequence, read N- to C-terminus: Mannosyl-oligosaccharide glucosidase (833 aa).

Topologically, residues 1–10 (MLISKSKMFK) are cytoplasmic. The helical; Signal-anchor for type II membrane protein transmembrane segment at 11–28 (TFWILTSIVLLASATVDI) threads the bilayer. The Lumenal portion of the chain corresponds to 29–833 (SKLQEFEEYQ…ALVVNILGRF (805 aa)). Residues asparagine 42 and asparagine 122 each coordinate substrate. 3 N-linked (GlcNAc...) asparagine glycosylation sites follow: asparagine 42, asparagine 122, and asparagine 135. Residue glutamate 143 coordinates substrate. The Proton donor role is filled by aspartate 601. Cysteine 669 and cysteine 685 are disulfide-bonded. Asparagine 787 carries N-linked (GlcNAc...) asparagine glycosylation. Glutamate 804 acts as the Proton acceptor in catalysis.

The protein belongs to the glycosyl hydrolase 63 family. N-glycosylated.

It localises to the endoplasmic reticulum membrane. It carries out the reaction N(4)-(alpha-D-Glc-(1-&gt;2)-alpha-D-Glc-(1-&gt;3)-alpha-D-Glc-(1-&gt;3)-alpha-D-Man-(1-&gt;2)-alpha-D-Man-(1-&gt;2)-alpha-D-Man-(1-&gt;3)-[alpha-D-Man-(1-&gt;2)-alpha-D-Man-(1-&gt;3)-[alpha-D-Man-(1-&gt;2)-alpha-D-Man-(1-&gt;6)]-alpha-D-Man-(1-&gt;6)]-beta-D-Man-(1-&gt;4)-beta-D-GlcNAc-(1-&gt;4)-beta-D-GlcNAc)-L-asparaginyl-[protein] + H2O = N(4)-(alpha-D-Glc-(1-&gt;3)-alpha-D-Glc-(1-&gt;3)-alpha-D-Man-(1-&gt;2)-alpha-D-Man-(1-&gt;2)-alpha-D-Man-(1-&gt;3)-[alpha-D-Man-(1-&gt;2)-alpha-D-Man-(1-&gt;3)-[alpha-D-Man-(1-&gt;2)-alpha-D-Man-(1-&gt;6)]-alpha-D-Man-(1-&gt;6)]-beta-D-Man-(1-&gt;4)-beta-D-GlcNAc-(1-&gt;4)-beta-D-GlcNAc)-L-asparaginyl-[protein] + beta-D-glucose. It functions in the pathway glycan metabolism; N-glycan degradation. With respect to regulation, miglitol is an effective inhibitor at 1 mM. Cleaves the distal alpha 1,2-linked glucose residue from the Glc(3)Man(9)GlcNAc(2) oligosaccharide precursor highly specifically. Seems to play a role in beta-1,6-glucan synthesis. This is Mannosyl-oligosaccharide glucosidase (CWH41) from Saccharomyces cerevisiae (strain ATCC 204508 / S288c) (Baker's yeast).